The sequence spans 96 residues: Dynein light chain roadblock-type 1 (96 aa).

Residue alanine 2 is modified to N-acetylalanine.

This sequence belongs to the GAMAD family. In terms of assembly, homodimer. The cytoplasmic dynein 1 complex consists of two catalytic heavy chains (HCs) and a number of non-catalytic subunits presented by intermediate chains (ICs), light intermediate chains (LICs) and light chains (LCs); the composition seems to vary in respect to the IC, LIC and LC composition. The heavy chain homodimer serves as a scaffold for the probable homodimeric assembly of the respective non-catalytic subunits. The ICs and LICs bind directly to the HC dimer and the LCs assemble on the IC dimer. Interacts with DYNLRB2. Interacts with DYNC1I1 and DYNC1I2. Interacts with RAB6A isoform 1 (GTP-bound); the interaction is direct. Interacts with RAB6A isoform 2 (GDP-bound); the interaction is direct. Interacts with RAB6B (GDP-bound). High expression in heart, liver, brain and pancreas; moderate in placenta, skeletal muscle and kidney; low in lung, prostate, testis, small intestine and colon. Isoform 1 expression is up-regulated in 64% hepatocellular carcinoma (HCC) patients.

It localises to the cytoplasm. The protein resides in the cytoskeleton. In terms of biological role, acts as one of several non-catalytic accessory components of the cytoplasmic dynein 1 complex that are thought to be involved in linking dynein to cargos and to adapter proteins that regulate dynein function. Cytoplasmic dynein 1 acts as a motor for the intracellular retrograde motility of vesicles and organelles along microtubules. The polypeptide is Dynein light chain roadblock-type 1 (Homo sapiens (Human)).